Consider the following 267-residue polypeptide: Undecaprenyl-diphosphatase (267 aa).

Helical transmembrane passes span 1–21 (MSLF…FLPV), 40–60 (GQVI…LYFW), 85–105 (LAMG…ALHF), 111–131 (ALRS…LLWW), 190–210 (MLMS…DVAV), 219–239 (DGAI…SLMM), and 245–265 (VSFT…LGIA).

Belongs to the UppP family.

It is found in the cell inner membrane. It carries out the reaction di-trans,octa-cis-undecaprenyl diphosphate + H2O = di-trans,octa-cis-undecaprenyl phosphate + phosphate + H(+). In terms of biological role, catalyzes the dephosphorylation of undecaprenyl diphosphate (UPP). Confers resistance to bacitracin. The chain is Undecaprenyl-diphosphatase from Ruegeria pomeroyi (strain ATCC 700808 / DSM 15171 / DSS-3) (Silicibacter pomeroyi).